Here is a 346-residue protein sequence, read N- to C-terminus: Dihydroorotase (346 aa).

Zn(2+) is bound by residues H17 and H19. Substrate is bound by residues 19–21 and N45; that span reads HLR. The Zn(2+) site is built by K103, H140, and H178. K103 carries the post-translational modification N6-carboxylysine. H140 is a binding site for substrate. L223 is a substrate binding site. D251 contacts Zn(2+). The active site involves D251. H255 and A267 together coordinate substrate.

This sequence belongs to the metallo-dependent hydrolases superfamily. DHOase family. Class II DHOase subfamily. As to quaternary structure, homodimer. It depends on Zn(2+) as a cofactor.

It catalyses the reaction (S)-dihydroorotate + H2O = N-carbamoyl-L-aspartate + H(+). The protein operates within pyrimidine metabolism; UMP biosynthesis via de novo pathway; (S)-dihydroorotate from bicarbonate: step 3/3. Functionally, catalyzes the reversible cyclization of carbamoyl aspartate to dihydroorotate. The protein is Dihydroorotase of Synechococcus sp. (strain RCC307).